The following is a 361-amino-acid chain: DNA replication and repair protein RecF (361 aa).

Position 30 to 37 (Gly30 to Thr37) interacts with ATP.

It belongs to the RecF family.

It is found in the cytoplasm. The RecF protein is involved in DNA metabolism; it is required for DNA replication and normal SOS inducibility. RecF binds preferentially to single-stranded, linear DNA. It also seems to bind ATP. The chain is DNA replication and repair protein RecF from Yersinia pestis.